A 218-amino-acid chain; its full sequence is Small ribosomal subunit protein uS3c (218 aa).

The 72-residue stretch at 47-118 (VQKNIRISSG…KLNIAITRIS (72 aa)) folds into the KH type-2 domain.

It belongs to the universal ribosomal protein uS3 family. In terms of assembly, part of the 30S ribosomal subunit.

It is found in the plastid. The protein resides in the chloroplast. The sequence is that of Small ribosomal subunit protein uS3c (rps3) from Nasturtium officinale (Watercress).